The chain runs to 346 residues: Putative [LysW]-L-2-aminoadipate/[LysW]-L-glutamate phosphate reductase (346 aa).

12-15 provides a ligand contact to NADP(+); that stretch reads SGFT. C147 is an active-site residue. An NADP(+)-binding site is contributed by N310.

It belongs to the NAGSA dehydrogenase family. Type 1 subfamily. LysY sub-subfamily.

The protein resides in the cytoplasm. The enzyme catalyses [amino-group carrier protein]-C-terminal-N-(1-carboxy-5-oxopentan-1-yl)-L-glutamine + phosphate + NADP(+) = [amino-group carrier protein]-C-terminal-N-(1-carboxy-5-phosphooxy-5-oxopentan-1-yl)-L-glutamine + NADPH + H(+). It carries out the reaction [amino-group carrier protein]-C-terminal-gamma-(L-glutamyl-5-semialdehyde)-L-glutamate + phosphate + NADP(+) = [amino-group carrier protein]-C-terminal-gamma-(5-phospho-L-glutamyl)-L-glutamate + NADPH + H(+). The protein operates within amino-acid biosynthesis; L-lysine biosynthesis via AAA pathway; L-lysine from L-alpha-aminoadipate (Thermus route): step 3/5. It functions in the pathway amino-acid biosynthesis; L-arginine biosynthesis. Functionally, involved in both the arginine and lysine biosynthetic pathways. This is Putative [LysW]-L-2-aminoadipate/[LysW]-L-glutamate phosphate reductase from Natronomonas pharaonis (strain ATCC 35678 / DSM 2160 / CIP 103997 / JCM 8858 / NBRC 14720 / NCIMB 2260 / Gabara) (Halobacterium pharaonis).